The sequence spans 775 residues: Probable ubiquitin carboxyl-terminal hydrolase creB (775 aa).

A disordered region spans residues 1–45 (MGSFLRSFRHNGGSTAPSVGAVPAKKEPQPPPMTPLEKRLLDMGP). The span at 36-45 (LEKRLLDMGP) shows a compositional bias: basic and acidic residues. The 414-residue stretch at 55–468 (YGMENYGNTC…CAYVLFYQET (414 aa)) folds into the USP domain. Cys-64 (nucleophile) is an active-site residue. Disordered stretches follow at residues 113 to 146 (EAEA…DSPE) and 238 to 269 (ASKQ…KTPN). A compositionally biased stretch (polar residues) spans 256 to 269 (SVDQSSSTGSKTPN). The active-site Proton acceptor is His-419. The segment at 496–775 (LKQNGFPQSP…LRKKSFSILS (280 aa)) is disordered. Low complexity-rich tracts occupy residues 546–566 (ESAP…SPLS) and 576–585 (ERVTTVATPP). Positions 586 to 653 (KNDALAKKER…ASKAEEDRRL (68 aa)) form a coiled coil. A compositionally biased stretch (basic and acidic residues) spans 589-662 (ALAKKERARE…LSHENGKEKQ (74 aa)). Residues 668-679 (RLKRGSKSLSHR) show a composition bias toward basic residues. Low complexity predominate over residues 705-725 (SQTGPTSEQQQQQQQQQSPPN). A compositionally biased stretch (basic and acidic residues) spans 739–757 (TIREDEQVNHKDSKHERTG). The segment covering 758–775 (HGKWRSFSLRKKSFSILS) has biased composition (basic residues).

This sequence belongs to the peptidase C19 family. As to quaternary structure, interacts with creA, creC and qutD.

The enzyme catalyses Thiol-dependent hydrolysis of ester, thioester, amide, peptide and isopeptide bonds formed by the C-terminal Gly of ubiquitin (a 76-residue protein attached to proteins as an intracellular targeting signal).. In terms of biological role, ubiquitin thioesterase component of the regulatory network controlling carbon source utilization through ubiquitination and deubiquitination involving creA, creB, creC, creD and acrB. Deubiquitinates the creA catabolic repressor and the quinate permease qutD. Also plays a role in response to carbon starvation and the control of extracellular proteases activity. This chain is Probable ubiquitin carboxyl-terminal hydrolase creB (creB), found in Aspergillus fumigatus (strain ATCC MYA-4609 / CBS 101355 / FGSC A1100 / Af293) (Neosartorya fumigata).